The chain runs to 427 residues: 3-phosphoshikimate 1-carboxyvinyltransferase (427 aa).

Lysine 23, serine 24, and arginine 28 together coordinate 3-phosphoshikimate. A phosphoenolpyruvate-binding site is contributed by lysine 23. The phosphoenolpyruvate site is built by glycine 97 and arginine 125. Serine 169, serine 170, glutamine 171, serine 197, aspartate 313, asparagine 336, and lysine 340 together coordinate 3-phosphoshikimate. Residue glutamine 171 participates in phosphoenolpyruvate binding. Aspartate 313 serves as the catalytic Proton acceptor. Residues arginine 344, arginine 386, and lysine 411 each contribute to the phosphoenolpyruvate site.

The protein belongs to the EPSP synthase family. As to quaternary structure, monomer.

Its subcellular location is the cytoplasm. It catalyses the reaction 3-phosphoshikimate + phosphoenolpyruvate = 5-O-(1-carboxyvinyl)-3-phosphoshikimate + phosphate. It functions in the pathway metabolic intermediate biosynthesis; chorismate biosynthesis; chorismate from D-erythrose 4-phosphate and phosphoenolpyruvate: step 6/7. Its function is as follows. Catalyzes the transfer of the enolpyruvyl moiety of phosphoenolpyruvate (PEP) to the 5-hydroxyl of shikimate-3-phosphate (S3P) to produce enolpyruvyl shikimate-3-phosphate and inorganic phosphate. The sequence is that of 3-phosphoshikimate 1-carboxyvinyltransferase from Yersinia ruckeri.